Here is a 363-residue protein sequence, read N- to C-terminus: Phosphoribosylformylglycinamidine cyclo-ligase (363 aa).

This sequence belongs to the AIR synthase family.

Its subcellular location is the cytoplasm. It catalyses the reaction 2-formamido-N(1)-(5-O-phospho-beta-D-ribosyl)acetamidine + ATP = 5-amino-1-(5-phospho-beta-D-ribosyl)imidazole + ADP + phosphate + H(+). It participates in purine metabolism; IMP biosynthesis via de novo pathway; 5-amino-1-(5-phospho-D-ribosyl)imidazole from N(2)-formyl-N(1)-(5-phospho-D-ribosyl)glycinamide: step 2/2. This Parvibaculum lavamentivorans (strain DS-1 / DSM 13023 / NCIMB 13966) protein is Phosphoribosylformylglycinamidine cyclo-ligase.